The sequence spans 296 residues: Acetyl-coenzyme A carboxylase carboxyl transferase subunit beta (296 aa).

The 270-residue stretch at 25 to 294 folds into the CoA carboxyltransferase N-terminal domain; that stretch reads VWTKCTACEQ…PFVEPELISE (270 aa). Positions 29, 32, 48, and 51 each coordinate Zn(2+). The C4-type zinc finger occupies 29–51; it reads CTACEQVLYSEELKRNLYVCPKC.

The protein belongs to the AccD/PCCB family. In terms of assembly, acetyl-CoA carboxylase is a heterohexamer composed of biotin carboxyl carrier protein (AccB), biotin carboxylase (AccC) and two subunits each of ACCase subunit alpha (AccA) and ACCase subunit beta (AccD). Zn(2+) is required as a cofactor.

It localises to the cytoplasm. It catalyses the reaction N(6)-carboxybiotinyl-L-lysyl-[protein] + acetyl-CoA = N(6)-biotinyl-L-lysyl-[protein] + malonyl-CoA. Its pathway is lipid metabolism; malonyl-CoA biosynthesis; malonyl-CoA from acetyl-CoA: step 1/1. In terms of biological role, component of the acetyl coenzyme A carboxylase (ACC) complex. Biotin carboxylase (BC) catalyzes the carboxylation of biotin on its carrier protein (BCCP) and then the CO(2) group is transferred by the transcarboxylase to acetyl-CoA to form malonyl-CoA. The chain is Acetyl-coenzyme A carboxylase carboxyl transferase subunit beta from Haemophilus influenzae (strain 86-028NP).